Consider the following 325-residue polypeptide: uncharacterized protein (325 aa).

Coiled coils occupy residues 38–69 (VHVA…QNQS) and 201–229 (ANTD…LEFK).

This is an uncharacterized protein from Acanthamoeba polyphaga (Amoeba).